We begin with the raw amino-acid sequence, 266 residues long: Thymidylate synthase (266 aa).

Arginine 24 provides a ligand contact to dUMP. Histidine 54 is a (6R)-5,10-methylene-5,6,7,8-tetrahydrofolate binding site. DUMP is bound at residue 129–130 (RR). Residue cysteine 149 is the Nucleophile of the active site. Residues 169–172 (RSAD), asparagine 180, and 210–212 (HIY) contribute to the dUMP site. (6R)-5,10-methylene-5,6,7,8-tetrahydrofolate is bound at residue aspartate 172. Alanine 265 contributes to the (6R)-5,10-methylene-5,6,7,8-tetrahydrofolate binding site.

Belongs to the thymidylate synthase family. Bacterial-type ThyA subfamily. In terms of assembly, homodimer.

The protein localises to the cytoplasm. The catalysed reaction is dUMP + (6R)-5,10-methylene-5,6,7,8-tetrahydrofolate = 7,8-dihydrofolate + dTMP. The protein operates within pyrimidine metabolism; dTTP biosynthesis. In terms of biological role, catalyzes the reductive methylation of 2'-deoxyuridine-5'-monophosphate (dUMP) to 2'-deoxythymidine-5'-monophosphate (dTMP) while utilizing 5,10-methylenetetrahydrofolate (mTHF) as the methyl donor and reductant in the reaction, yielding dihydrofolate (DHF) as a by-product. This enzymatic reaction provides an intracellular de novo source of dTMP, an essential precursor for DNA biosynthesis. This chain is Thymidylate synthase, found in Mycobacterium sp. (strain KMS).